A 439-amino-acid chain; its full sequence is Protein CNPPD1 (439 aa).

Residues 231–251 (CLLGVVYLTGFAAVFTSIAVV) form a helical membrane-spanning segment. Positions 283 to 302 (ALAPEQPQPKLPDVSPPSST) are disordered.

The protein belongs to the CNPPD1 family.

It localises to the membrane. This Gallus gallus (Chicken) protein is Protein CNPPD1 (CNPPD1).